The sequence spans 450 residues: Tubulin alpha-5 chain (450 aa).

GTP is bound by residues Q11, E71, G144, T145, T179, N206, and N228. E71 serves as a coordination point for Mg(2+). Residue E254 is part of the active site. At T349 the chain carries Phosphothreonine. The interval E429–Y450 is disordered. Acidic residues predominate over residues D431 to Y450.

This sequence belongs to the tubulin family. In terms of assembly, dimer of alpha and beta chains. A typical microtubule is a hollow water-filled tube with an outer diameter of 25 nm and an inner diameter of 15 nM. Alpha-beta heterodimers associate head-to-tail to form protofilaments running lengthwise along the microtubule wall with the beta-tubulin subunit facing the microtubule plus end conferring a structural polarity. Microtubules usually have 13 protofilaments but different protofilament numbers can be found in some organisms and specialized cells. The cofactor is Mg(2+). Post-translationally, undergoes a tyrosination/detyrosination cycle, the cyclic removal and re-addition of a C-terminal tyrosine residue by the enzymes tubulin tyrosine carboxypeptidase (TTCP) and tubulin tyrosine ligase (TTL), respectively.

Its subcellular location is the cytoplasm. The protein localises to the cytoskeleton. It catalyses the reaction GTP + H2O = GDP + phosphate + H(+). Functionally, tubulin is the major constituent of microtubules, a cylinder consisting of laterally associated linear protofilaments composed of alpha- and beta-tubulin heterodimers. Microtubules grow by the addition of GTP-tubulin dimers to the microtubule end, where a stabilizing cap forms. Below the cap, tubulin dimers are in GDP-bound state, owing to GTPase activity of alpha-tubulin. The protein is Tubulin alpha-5 chain (TUBA5) of Arabidopsis thaliana (Mouse-ear cress).